The primary structure comprises 516 residues: 3-phosphoshikimate 1-carboxyvinyltransferase, chloroplastic (516 aa).

Residues Met-1–Glu-72 constitute a chloroplast transit peptide. 3-phosphoshikimate contacts are provided by Lys-95, Ser-96, and Arg-100. Phosphoenolpyruvate is bound at residue Lys-95. Residues Gly-173 and Arg-203 each coordinate phosphoenolpyruvate. Ser-250, Ser-251, Gln-252, Ser-278, Asp-403, and Lys-430 together coordinate 3-phosphoshikimate. Gln-252 lines the phosphoenolpyruvate pocket. Asp-403 functions as the Proton acceptor in the catalytic mechanism. 3 residues coordinate phosphoenolpyruvate: Arg-434, Arg-476, and Lys-501.

This sequence belongs to the EPSP synthase family.

It is found in the plastid. It localises to the chloroplast. It carries out the reaction 3-phosphoshikimate + phosphoenolpyruvate = 5-O-(1-carboxyvinyl)-3-phosphoshikimate + phosphate. It functions in the pathway metabolic intermediate biosynthesis; chorismate biosynthesis; chorismate from D-erythrose 4-phosphate and phosphoenolpyruvate: step 6/7. In terms of biological role, catalyzes the transfer of the enolpyruvyl moiety of phosphoenolpyruvate (PEP) to the 5-hydroxyl of shikimate-3-phosphate (S3P) to produce enolpyruvyl shikimate-3-phosphate and inorganic phosphate. This chain is 3-phosphoshikimate 1-carboxyvinyltransferase, chloroplastic, found in Brassica napus (Rape).